The chain runs to 368 residues: Chaperone protein DnaJ (368 aa).

Positions 5 to 70 (DYYQVLGVPR…KKRKLYDTHG (66 aa)) constitute a J domain. A CR-type zinc finger spans residues 124–201 (GVERQIQIPT…CNGAGRVEDH (78 aa)). The Zn(2+) site is built by Cys137, Cys140, Cys153, Cys156, Cys175, Cys178, Cys189, and Cys192. 4 CXXCXGXG motif repeats span residues 137-144 (CTHCNGSG), 153-160 (CGTCRGSG), 175-182 (CPHCGGRG), and 189-196 (CKVCNGAG).

The protein belongs to the DnaJ family. As to quaternary structure, homodimer. Zn(2+) is required as a cofactor.

The protein localises to the cytoplasm. Functionally, participates actively in the response to hyperosmotic and heat shock by preventing the aggregation of stress-denatured proteins and by disaggregating proteins, also in an autonomous, DnaK-independent fashion. Unfolded proteins bind initially to DnaJ; upon interaction with the DnaJ-bound protein, DnaK hydrolyzes its bound ATP, resulting in the formation of a stable complex. GrpE releases ADP from DnaK; ATP binding to DnaK triggers the release of the substrate protein, thus completing the reaction cycle. Several rounds of ATP-dependent interactions between DnaJ, DnaK and GrpE are required for fully efficient folding. Also involved, together with DnaK and GrpE, in the DNA replication of plasmids through activation of initiation proteins. The sequence is that of Chaperone protein DnaJ from Xylella fastidiosa (strain M12).